Consider the following 275-residue polypeptide: Large ribosomal subunit protein uL2 (275 aa).

The segment covering 28 to 38 has biased composition (basic and acidic residues); the sequence is RPYEPLVETKS. 2 disordered regions span residues 28 to 53 and 222 to 275; these read RPYEPLVETKSKSGGRNNVGRITTRH and GVAM…RSAK. A compositionally biased stretch (basic residues) spans 254 to 275; it reads KGHKTRKNKRTDKMIVRRRSAK.

Belongs to the universal ribosomal protein uL2 family. Part of the 50S ribosomal subunit. Forms a bridge to the 30S subunit in the 70S ribosome.

Its function is as follows. One of the primary rRNA binding proteins. Required for association of the 30S and 50S subunits to form the 70S ribosome, for tRNA binding and peptide bond formation. It has been suggested to have peptidyltransferase activity; this is somewhat controversial. Makes several contacts with the 16S rRNA in the 70S ribosome. This is Large ribosomal subunit protein uL2 from Marinobacter nauticus (strain ATCC 700491 / DSM 11845 / VT8) (Marinobacter aquaeolei).